Consider the following 2472-residue polypeptide: Spectrin alpha chain, non-erythrocytic 1 (2472 aa).

At methionine 1 the chain carries N-acetylmethionine. 9 Spectrin repeats span residues 45 to 146 (RFQF…IKLL), 150 to 251 (KLVQ…QGKL), 256 to 358 (EVQR…ARLN), 361 to 465 (YRLQ…QYEQ), 468 to 570 (DLQL…AQLA), 574 to 676 (HLQQ…KLRE), 679 to 781 (QQQQ…QKLA), 785 to 888 (RLQQ…DLED), and 891 to 969 (QAQQ…ETGK). Serine 587 carries the phosphoserine modification. Lysine 637 bears the N6-acetyllysine mark. Lysine 803 is subject to N6-acetyllysine. A phosphoserine mark is found at serine 924, serine 982, serine 999, serine 1029, serine 1031, and serine 1041. In terms of domain architecture, SH3 spans 967-1026 (TGKELVLALYDYQEKSPREVTMKKGDILTLLNSTNKDWWKVEVNDRQGFVPAAYVKKLDP). The Spectrin 10 repeat unit spans residues 1096 to 1166 (LFREANELQQ…LESEGLMAEE (71 aa)). Tyrosine 1176 is modified (phosphotyrosine). Phosphoserine is present on residues serine 1190, serine 1207, serine 1217, serine 1291, serine 1306, serine 1323, and serine 1338. The Spectrin 11 repeat unit spans residues 1233–1336 (HEVQRFHRDA…RADQRKAKLG (104 aa)). Spectrin repeat units lie at residues 1339 to 1442 (HDLQ…MMLD) and 1446 to 1549 (ELQL…KLGE). Position 1519 is an N6-acetyllysine (lysine 1519). Phosphoserine occurs at positions 1550, 1557, 1578, 1615, and 1647. Spectrin repeat units follow at residues 1552-1656 (TLQQ…KLKE), 1659-1762 (KQQN…KLNE), 1764-1868 (HRLH…RLEE), 1871-1974 (EYQQ…KLDE), 1978-2081 (FLQF…KLLE), 2092-2194 (LFLT…LELQ), and 2206-2310 (LRQE…NLEQ). A Phosphothreonine modification is found at threonine 2020. An N6-acetyllysine modification is found at lysine 2052. EF-hand domains lie at 2323–2358 (EALK…LGYD), 2366–2401 (EPDP…RETE), and 2404–2439 (KSSE…EQAD). Ca(2+)-binding residues include aspartate 2336, aspartate 2338, serine 2340, arginine 2342, glutamate 2347, aspartate 2379, asparagine 2381, aspartate 2383, histidine 2385, and glutamate 2390. The residue at position 2421 (lysine 2421) is an N6-acetyllysine.

It belongs to the spectrin family. Like erythrocyte spectrin, the spectrin-like proteins are capable of forming dimers which can further associate to tetramers. Interacts (via C-terminal spectrin repeats) with TRPC4. Interacts with CALM and EMD. Interacts with isoform 1 of ACP1. Identified in a complex with ACTN4, CASK, IQGAP1, MAGI2, NPHS1 and SPTBN1. Interacts with SHANK3 (via ANK repeats). Interacts with CLN3; this interaction regulates the fodrin localization at the plasma membrane. In terms of processing, phosphorylation of Tyr-1176 decreases sensitivity to cleavage by calpain in vitro.

The protein localises to the cytoplasm. It is found in the cytoskeleton. The protein resides in the cell cortex. Its function is as follows. Fodrin, which seems to be involved in secretion, interacts with calmodulin in a calcium-dependent manner and is thus candidate for the calcium-dependent movement of the cytoskeleton at the membrane. In Homo sapiens (Human), this protein is Spectrin alpha chain, non-erythrocytic 1 (SPTAN1).